We begin with the raw amino-acid sequence, 306 residues long: Lipoyl synthase (306 aa).

[4Fe-4S] cluster is bound by residues Cys-55, Cys-60, Cys-66, Cys-81, Cys-85, Cys-88, and Ser-294. In terms of domain architecture, Radical SAM core spans 67-283 (WNHRTATFLL…RSYALARGFT (217 aa)).

It belongs to the radical SAM superfamily. Lipoyl synthase family. The cofactor is [4Fe-4S] cluster.

The protein resides in the cytoplasm. It catalyses the reaction [[Fe-S] cluster scaffold protein carrying a second [4Fe-4S](2+) cluster] + N(6)-octanoyl-L-lysyl-[protein] + 2 oxidized [2Fe-2S]-[ferredoxin] + 2 S-adenosyl-L-methionine + 4 H(+) = [[Fe-S] cluster scaffold protein] + N(6)-[(R)-dihydrolipoyl]-L-lysyl-[protein] + 4 Fe(3+) + 2 hydrogen sulfide + 2 5'-deoxyadenosine + 2 L-methionine + 2 reduced [2Fe-2S]-[ferredoxin]. It functions in the pathway protein modification; protein lipoylation via endogenous pathway; protein N(6)-(lipoyl)lysine from octanoyl-[acyl-carrier-protein]: step 2/2. Its function is as follows. Catalyzes the radical-mediated insertion of two sulfur atoms into the C-6 and C-8 positions of the octanoyl moiety bound to the lipoyl domains of lipoate-dependent enzymes, thereby converting the octanoylated domains into lipoylated derivatives. The polypeptide is Lipoyl synthase (Chloroflexus aurantiacus (strain ATCC 29364 / DSM 637 / Y-400-fl)).